Reading from the N-terminus, the 396-residue chain is MAKKIVTDLELKGKTVLVRADFNVPMKDGEITDDNRIVQALPTIKYIIEQGGKVVLFSHLGKVKEESDKAALTLKPVANALTEKLGEEVTFVPETRGETLEQSVKDLNEGDVLLVENTRFEDVDGKKESKNDPELGKYWASLGDVFVNDAFGTAHREHASNVGIASNLETVAGFLMEKEIKYIGGVVENPDKPVVAILGGAKVSDKIGVITNLLKIADKVLIGGGMSYTFFKAQGKEIGLSLLEKDKVDFAKELLDRAGDQIVLPVDCKVAKEFSNDAEITEVSVDDIPADQEAMDIGPKSVELFKEQLQGAHTVVWNGPMGVFELSNFAKGTIGVCEAIAELKDANTIIGGGDSAAAAISLGYGDDFSHISTGGGASLEYLEGKELPGVVAIANK.

Residues 21–23 (DFN), R36, 59–62 (HLGK), R119, and R156 each bind substrate. Residues K206, E325, and 352–355 (GGDS) each bind ATP.

The protein belongs to the phosphoglycerate kinase family. Monomer.

It is found in the cytoplasm. It catalyses the reaction (2R)-3-phosphoglycerate + ATP = (2R)-3-phospho-glyceroyl phosphate + ADP. The protein operates within carbohydrate degradation; glycolysis; pyruvate from D-glyceraldehyde 3-phosphate: step 2/5. The sequence is that of Phosphoglycerate kinase from Staphylococcus saprophyticus subsp. saprophyticus (strain ATCC 15305 / DSM 20229 / NCIMB 8711 / NCTC 7292 / S-41).